We begin with the raw amino-acid sequence, 1041 residues long: Toll-like receptor 8 (1041 aa).

The signal sequence occupies residues 1–26 (MENMFLQSSMLTCIFLLISGSCELCA). The Extracellular portion of the chain corresponds to 27–827 (EENFSRSYPC…ELTTCVSDVT (801 aa)). N-linked (GlcNAc...) asparagine glycans are attached at residues N29, N42, N80, N88, and N115. C36 and C49 form a disulfide bridge. LRR repeat units follow at residues 126–147 (NLRELLLEDNQLPQIPSGLPES), 148–168 (LTELSLIQNNIYNITKEGISR), 171–193 (NLKNLYLAWNCYFNKVCEKTNIE), 202–223 (NLELLSLSFNSLSHVPPKLPSS), 224–244 (LRKLFLSNTQIKYISEEDFKG), and 247–268 (NLTLLDLSGNCPRCFNAPFPCV). N160 is a glycosylation site (N-linked (GlcNAc...) asparagine). The cysteines at positions 181 and 187 are disulfide-linked. The N-linked (GlcNAc...) asparagine glycan is linked to N247. 2 cysteine pairs are disulfide-bonded: C257–C270 and C260–C267. Residues N285 and N293 are each glycosylated (N-linked (GlcNAc...) asparagine). LRR repeat units follow at residues 288 to 309 (QLRYLNLSSTSLRKINAAWFKN), 312 to 334 (HLKVLDLEFNYLVGEIASGAFLT), and 338 to 360 (RLEILDLSFNYIKGSYPQHINIS). 2 N-linked (GlcNAc...) asparagine glycosylation sites follow: N358 and N362. LRR repeat units lie at residues 368-389 (SLRALHLRGYVFQELREDDFQP), 395-416 (NLSTINLGINFIKQIDFKLFQN), and 419-440 (NLEIIYLSENRISPLVKDTRQS). 2 N-linked (GlcNAc...) asparagine glycosylation sites follow: N395 and N416. N443 carries N-linked (GlcNAc...) asparagine glycosylation. An intrachain disulfide couples C479 to C509. 4 LRR repeats span residues 482–503 (YGKALDLSLNSIFFIGPNQFEN), 506–527 (DIACLNLSANSNAQVLSGTEFS), 531–551 (HVKYLDLTNNRLDFDNASALT), and 555–577 (DLEVLDLSYNSHYFRIAGVTHHL). N511 and N546 each carry an N-linked (GlcNAc...) asparagine glycan. 2 N-linked (GlcNAc...) asparagine glycosylation sites follow: N582 and N590. LRR repeat units follow at residues 585-606 (NLKVLNLSHNNIYTLTDKYNLE), 609-630 (SLVELVFSGNRLDILWNDDDNR), 640-661 (NLTRLDLSLNRLKHIPNEAFLN), 665-685 (SLTELHINDNMLKFFNWTLLQ), 689-710 (RLELLDLRGNKLLFLTDSLSDF), 713-734 (SLRTLLLSHNRISHLPSGFLSE), and 737-758 (SLKHLDLSSNLLKTINKSALET). N-linked (GlcNAc...) asparagine glycosylation is found at N640 and N680. N752 is a glycosylation site (N-linked (GlcNAc...) asparagine). The LRRCT domain occupies 772–824 (NPFECTCDIGDFRRWMDEHLNVKIPRLVDVICASPGDQRGKSIVSLELTTCVS). Cysteines 776 and 803 form a disulfide. The helical transmembrane segment at 828 to 848 (AVILFFFTFFITTMVMLAALA) threads the bilayer. The Cytoplasmic segment spans residues 849-1041 (HHLFYWDVWF…NMYVDSIKQY (193 aa)). A TIR domain is found at 878 to 1022 (TFYDAYISYD…LFWQTLRNVV (145 aa)).

This sequence belongs to the Toll-like receptor family. Homodimer. Interacts with MYD88 via their respective TIR domains. Interacts with UNC93B1. Interacts with BTK. Interacts with SMPDL3B. Ubiquitinated by RNF216; leading to degradation by the proteasome. In terms of processing, proteolytic processing occurs in monocytes and monocyte-derived macrophages by both furin-like proprotein convertase and cathepsins. The cleavage is necessary for dimer formation and subsequent activation. Expressed in myeloid dendritic cells, monocytes, and monocyte-derived dendritic cells.

Its subcellular location is the endosome membrane. With respect to regulation, activated by RNAs having enough uridines. Functionally, endosomal receptor that plays a key role in innate and adaptive immunity. Controls host immune response against pathogens through recognition of RNA degradation products specific to microorganisms that are initially processed by RNASET2. Recognizes GU-rich single-stranded RNA (GU-rich RNA) derived from SARS-CoV-2, SARS-CoV-1 and HIV-1 viruses. Upon binding to agonists, undergoes dimerization that brings TIR domains from the two molecules into direct contact, leading to the recruitment of TIR-containing downstream adapter MYD88 through homotypic interaction. In turn, the Myddosome signaling complex is formed involving IRAK4, IRAK1, TRAF6, TRAF3 leading to activation of downstream transcription factors NF-kappa-B and IRF7 to induce pro-inflammatory cytokines and interferons, respectively. This chain is Toll-like receptor 8, found in Homo sapiens (Human).